The sequence spans 233 residues: 2-C-methyl-D-erythritol 4-phosphate cytidylyltransferase (233 aa).

This sequence belongs to the IspD/TarI cytidylyltransferase family. IspD subfamily.

It catalyses the reaction 2-C-methyl-D-erythritol 4-phosphate + CTP + H(+) = 4-CDP-2-C-methyl-D-erythritol + diphosphate. It participates in isoprenoid biosynthesis; isopentenyl diphosphate biosynthesis via DXP pathway; isopentenyl diphosphate from 1-deoxy-D-xylulose 5-phosphate: step 2/6. In terms of biological role, catalyzes the formation of 4-diphosphocytidyl-2-C-methyl-D-erythritol from CTP and 2-C-methyl-D-erythritol 4-phosphate (MEP). The polypeptide is 2-C-methyl-D-erythritol 4-phosphate cytidylyltransferase (Lachnoclostridium phytofermentans (strain ATCC 700394 / DSM 18823 / ISDg) (Clostridium phytofermentans)).